Consider the following 152-residue polypeptide: Small ribosomal subunit protein uS13 (152 aa).

It belongs to the universal ribosomal protein uS13 family. In terms of assembly, part of the 30S ribosomal subunit. Forms a loose heterodimer with protein S19. Forms two bridges to the 50S subunit in the 70S ribosome.

In terms of biological role, located at the top of the head of the 30S subunit, it contacts several helices of the 16S rRNA. In the 70S ribosome it contacts the 23S rRNA (bridge B1a) and protein L5 of the 50S subunit (bridge B1b), connecting the 2 subunits; these bridges are implicated in subunit movement. This chain is Small ribosomal subunit protein uS13, found in Pyrobaculum aerophilum (strain ATCC 51768 / DSM 7523 / JCM 9630 / CIP 104966 / NBRC 100827 / IM2).